A 251-amino-acid polypeptide reads, in one-letter code: Hydroxyacylglutathione hydrolase (251 aa).

Positions 53, 55, 57, 58, 110, 127, and 165 each coordinate Zn(2+).

The protein belongs to the metallo-beta-lactamase superfamily. Glyoxalase II family. Monomer. Zn(2+) is required as a cofactor.

The enzyme catalyses an S-(2-hydroxyacyl)glutathione + H2O = a 2-hydroxy carboxylate + glutathione + H(+). It functions in the pathway secondary metabolite metabolism; methylglyoxal degradation; (R)-lactate from methylglyoxal: step 2/2. In terms of biological role, thiolesterase that catalyzes the hydrolysis of S-D-lactoyl-glutathione to form glutathione and D-lactic acid. The protein is Hydroxyacylglutathione hydrolase of Salmonella typhi.